The following is a 458-amino-acid chain: Bifunctional protein GlmU (458 aa).

A pyrophosphorylase region spans residues 1–229 (MNKFAIVLAA…FDESLGVNDR (229 aa)). UDP-N-acetyl-alpha-D-glucosamine contacts are provided by residues 8-11 (LAAG), K22, Q72, and 77-78 (GT). Position 102 (D102) interacts with Mg(2+). UDP-N-acetyl-alpha-D-glucosamine contacts are provided by G139, E154, N169, and N227. Mg(2+) is bound at residue N227. The tract at residues 230–250 (VALSQAELTMRKRINHQHMVN) is linker. Positions 251–458 (GVTLIDPATT…AKKMPHYRGQ (208 aa)) are N-acetyltransferase. R332 and K350 together coordinate UDP-N-acetyl-alpha-D-glucosamine. H362 functions as the Proton acceptor in the catalytic mechanism. UDP-N-acetyl-alpha-D-glucosamine contacts are provided by Y365 and N376. Acetyl-CoA-binding residues include A379, S404, A422, and R439.

In the N-terminal section; belongs to the N-acetylglucosamine-1-phosphate uridyltransferase family. It in the C-terminal section; belongs to the transferase hexapeptide repeat family. Homotrimer. Mg(2+) serves as cofactor.

It is found in the cytoplasm. It carries out the reaction alpha-D-glucosamine 1-phosphate + acetyl-CoA = N-acetyl-alpha-D-glucosamine 1-phosphate + CoA + H(+). The catalysed reaction is N-acetyl-alpha-D-glucosamine 1-phosphate + UTP + H(+) = UDP-N-acetyl-alpha-D-glucosamine + diphosphate. Its pathway is nucleotide-sugar biosynthesis; UDP-N-acetyl-alpha-D-glucosamine biosynthesis; N-acetyl-alpha-D-glucosamine 1-phosphate from alpha-D-glucosamine 6-phosphate (route II): step 2/2. The protein operates within nucleotide-sugar biosynthesis; UDP-N-acetyl-alpha-D-glucosamine biosynthesis; UDP-N-acetyl-alpha-D-glucosamine from N-acetyl-alpha-D-glucosamine 1-phosphate: step 1/1. It functions in the pathway bacterial outer membrane biogenesis; LPS lipid A biosynthesis. In terms of biological role, catalyzes the last two sequential reactions in the de novo biosynthetic pathway for UDP-N-acetylglucosamine (UDP-GlcNAc). The C-terminal domain catalyzes the transfer of acetyl group from acetyl coenzyme A to glucosamine-1-phosphate (GlcN-1-P) to produce N-acetylglucosamine-1-phosphate (GlcNAc-1-P), which is converted into UDP-GlcNAc by the transfer of uridine 5-monophosphate (from uridine 5-triphosphate), a reaction catalyzed by the N-terminal domain. This Lactococcus lactis subsp. lactis (strain IL1403) (Streptococcus lactis) protein is Bifunctional protein GlmU.